The primary structure comprises 332 residues: Solute carrier family 25 member 16 (332 aa).

Solcar repeat units lie at residues 34–120 (FYWL…YKTL), 128–216 (SGHV…LKSV), and 238–328 (LKTH…MKQF). 6 helical membrane-spanning segments follow: residues 37-57 (LRSFLAGGIAGCCAKTTVAPL), 88-108 (GFLGLYKGNGAMMIRIFPYGA), 134-154 (LMAGSMAGMTAVICTYPLDMV), 191-211 (GLMPTILGMAPYAGVSFFTFG), 244-264 (LLCGGVAGAIAQTISYPFDVT), and 299-319 (GLYRGLSLNYIRCIPSQAVAF).

It belongs to the mitochondrial carrier (TC 2.A.29) family.

It is found in the mitochondrion inner membrane. May be involved in the transport of coenzyme A in the mitochondrial matrix. Very little is known about the physiological function of this carrier. The protein is Solute carrier family 25 member 16 of Homo sapiens (Human).